Here is a 36-residue protein sequence, read N- to C-terminus: MTGEIFFVAGLVFVLTLVGMAIGFGVLKLRGEGKEA.

A helical transmembrane segment spans residues 5–25 (IFFVAGLVFVLTLVGMAIGFG).

Belongs to the PetM family. In terms of assembly, the 4 large subunits of the cytochrome b6-f complex are cytochrome b6, subunit IV (17 kDa polypeptide, PetD), cytochrome f and the Rieske protein, while the 4 small subunits are PetG, PetL, PetM and PetN. The complex functions as a dimer.

The protein resides in the cell inner membrane. Functionally, component of the cytochrome b6-f complex, which mediates electron transfer between photosystem II (PSII) and photosystem I (PSI), cyclic electron flow around PSI, and state transitions. The protein is Cytochrome b6-f complex subunit 7 of Gloeobacter violaceus (strain ATCC 29082 / PCC 7421).